The following is a 179-amino-acid chain: Nucleoside-triphosphatase THEP1 (179 aa).

ATP-binding positions include 7–14 (GRPGVGKT) and 94–101 (LIIVDEIG).

It belongs to the THEP1 NTPase family.

The catalysed reaction is a ribonucleoside 5'-triphosphate + H2O = a ribonucleoside 5'-diphosphate + phosphate + H(+). In terms of biological role, has nucleotide phosphatase activity towards ATP, GTP, CTP, TTP and UTP. May hydrolyze nucleoside diphosphates with lower efficiency. The chain is Nucleoside-triphosphatase THEP1 from Thermotoga petrophila (strain ATCC BAA-488 / DSM 13995 / JCM 10881 / RKU-1).